Consider the following 129-residue polypeptide: Large ribosomal subunit protein bL20 (129 aa).

The protein belongs to the bacterial ribosomal protein bL20 family.

Functionally, binds directly to 23S ribosomal RNA and is necessary for the in vitro assembly process of the 50S ribosomal subunit. It is not involved in the protein synthesizing functions of that subunit. This Mycobacterium sp. (strain JLS) protein is Large ribosomal subunit protein bL20.